Here is a 180-residue protein sequence, read N- to C-terminus: Crossover junction endodeoxyribonuclease RuvC (180 aa).

Active-site residues include aspartate 7, glutamate 66, and aspartate 138. Positions 7, 66, and 138 each coordinate Mg(2+).

This sequence belongs to the RuvC family. In terms of assembly, homodimer which binds Holliday junction (HJ) DNA. The HJ becomes 2-fold symmetrical on binding to RuvC with unstacked arms; it has a different conformation from HJ DNA in complex with RuvA. In the full resolvosome a probable DNA-RuvA(4)-RuvB(12)-RuvC(2) complex forms which resolves the HJ. Mg(2+) serves as cofactor.

It is found in the cytoplasm. The enzyme catalyses Endonucleolytic cleavage at a junction such as a reciprocal single-stranded crossover between two homologous DNA duplexes (Holliday junction).. The RuvA-RuvB-RuvC complex processes Holliday junction (HJ) DNA during genetic recombination and DNA repair. Endonuclease that resolves HJ intermediates. Cleaves cruciform DNA by making single-stranded nicks across the HJ at symmetrical positions within the homologous arms, yielding a 5'-phosphate and a 3'-hydroxyl group; requires a central core of homology in the junction. The consensus cleavage sequence is 5'-(A/T)TT(C/G)-3'. Cleavage occurs on the 3'-side of the TT dinucleotide at the point of strand exchange. HJ branch migration catalyzed by RuvA-RuvB allows RuvC to scan DNA until it finds its consensus sequence, where it cleaves and resolves the cruciform DNA. The sequence is that of Crossover junction endodeoxyribonuclease RuvC from Burkholderia thailandensis (strain ATCC 700388 / DSM 13276 / CCUG 48851 / CIP 106301 / E264).